The sequence spans 302 residues: ATP synthase gamma chain, sodium ion specific (302 aa).

The protein belongs to the ATPase gamma chain family. In terms of assembly, F-type ATPases have 2 components, CF(1) - the catalytic core - and CF(0) - the membrane proton channel. CF(1) has five subunits: alpha(3), beta(3), gamma(1), delta(1), epsilon(1). CF(0) has three main subunits: a, b and c.

The protein localises to the cell membrane. With respect to regulation, inhibited by nitrate. Produces ATP from ADP in the presence of a proton gradient across the membrane. The gamma chain is believed to be important in regulating ATPase activity and the flow of protons through the CF(0) complex. The protein is ATP synthase gamma chain, sodium ion specific (atpG) of Acetobacterium woodii (strain ATCC 29683 / DSM 1030 / JCM 2381 / KCTC 1655 / WB1).